Here is a 192-residue protein sequence, read N- to C-terminus: uncharacterized protein (192 aa).

Residues 1–17 (MFLHLILLAGLAPVVYL) form the signal peptide.

This is an uncharacterized protein from Caenorhabditis elegans.